The sequence spans 463 residues: Glutamate--tRNA ligase (463 aa).

A 'HIGH' region motif is present at residues 9–19; the sequence is PSPTGYLHVGG. Basic and acidic residues predominate over residues 115 to 129; that stretch reads AGEKPRYDGTWRPEA. The interval 115-136 is disordered; sequence AGEKPRYDGTWRPEAGKTLPAI. The 'KMSKS' region motif lies at 241–245; sequence KLSKR. Position 244 (Lys244) interacts with ATP.

The protein belongs to the class-I aminoacyl-tRNA synthetase family. Glutamate--tRNA ligase type 1 subfamily. As to quaternary structure, monomer.

Its subcellular location is the cytoplasm. The catalysed reaction is tRNA(Glu) + L-glutamate + ATP = L-glutamyl-tRNA(Glu) + AMP + diphosphate. Its function is as follows. Catalyzes the attachment of glutamate to tRNA(Glu) in a two-step reaction: glutamate is first activated by ATP to form Glu-AMP and then transferred to the acceptor end of tRNA(Glu). The chain is Glutamate--tRNA ligase from Janthinobacterium sp. (strain Marseille) (Minibacterium massiliensis).